The following is a 266-amino-acid chain: DNA damage-regulated autophagy modulator protein 2 (266 aa).

6 helical membrane-spanning segments follow: residues 8-28 (LSFL…FSYI), 53-73 (KCLF…TIYV), 92-112 (NKAG…VANF), 117-137 (FFAV…LYMF), 160-180 (LLLV…SSLL), and 207-227 (ITTA…LTYI).

The protein belongs to the DRAM/TMEM150 family.

It is found in the lysosome membrane. The protein localises to the photoreceptor inner segment. Its subcellular location is the apical cell membrane. Plays a role in the initiation of autophagy. In the retina, might be involved in the process of photoreceptor cells renewal and recycling to preserve visual function. Induces apoptotic cell death when coexpressed with DRAM1. In Bos taurus (Bovine), this protein is DNA damage-regulated autophagy modulator protein 2 (DRAM2).